Consider the following 402-residue polypeptide: MAT+ sexual cell fertilization-promoting factor (402 aa).

The HMG box DNA-binding region spans 169-237; the sequence is IPRPPNAYIL…KLMSAHPHYR (69 aa). The segment at 246–272 is disordered; it reads IRRRAPRRNRAQEVANASPIGENSGAP.

Its subcellular location is the nucleus. Its function is as follows. Controls fertilization, probably by determining the mating type. The polypeptide is MAT+ sexual cell fertilization-promoting factor (FPR1) (Podospora anserina (Pleurage anserina)).